The chain runs to 135 residues: MLSPKRTRFRKQHRGRMKGISYRGNHISFGKYALQALEPAWITSRQIEAGRRAMTRNARRGGKIWVRIFPDKPVTVRPAETRMGSGKGSPEYWVAVVKPGRILYEMGGVTENIARRAISIASSKMPIRTQFIISG.

The protein belongs to the universal ribosomal protein uL16 family. Part of the 50S ribosomal subunit.

The protein resides in the plastid. The protein localises to the chloroplast. The sequence is that of Large ribosomal subunit protein uL16c from Daucus carota (Wild carrot).